The primary structure comprises 174 residues: Alkyl hydroperoxide reductase AhpD (174 aa).

Cys-130 acts as the Proton donor in catalysis. A disulfide bridge connects residues Cys-130 and Cys-133. The Cysteine sulfenic acid (-SOH) intermediate role is filled by Cys-133.

This sequence belongs to the AhpD family. In terms of assembly, homotrimer.

It catalyses the reaction N(6)-[(R)-dihydrolipoyl]-L-lysyl-[lipoyl-carrier protein] + a hydroperoxide = N(6)-[(R)-lipoyl]-L-lysyl-[lipoyl-carrier protein] + an alcohol + H2O. In terms of biological role, antioxidant protein with alkyl hydroperoxidase activity. Required for the reduction of the AhpC active site cysteine residues and for the regeneration of the AhpC enzyme activity. The protein is Alkyl hydroperoxide reductase AhpD of Corynebacterium kroppenstedtii (strain DSM 44385 / JCM 11950 / CIP 105744 / CCUG 35717).